A 137-amino-acid polypeptide reads, in one-letter code: DNA-binding protein H-NS (137 aa).

A DNA-binding region spans residues 112-117; it reads QGRTPA.

Belongs to the histone-like protein H-NS family. As to quaternary structure, homodimer that oligomerizes on DNA into higher-order complexes that form bridges between disparate regions of DNA compacting it. Interacts with Hha, YdgT and StpA.

The protein localises to the cytoplasm. The protein resides in the nucleoid. Functionally, a DNA-binding protein implicated in transcriptional repression and chromosome organization and compaction. Binds nucleation sites in AT-rich DNA and bridges them, forming higher-order nucleoprotein complexes and condensing the chromosome. As many horizontally transferred genes are AT-rich, it plays a central role in silencing foreign genes. A subset of genes are repressed by H-NS in association with other proteins. This chain is DNA-binding protein H-NS (hns), found in Salmonella paratyphi A (strain ATCC 9150 / SARB42).